The primary structure comprises 148 residues: 3-dehydroquinate dehydratase (148 aa).

The Proton acceptor role is filled by Tyr-23. Substrate is bound by residues Asn-75, His-81, and Asp-88. His-101 (proton donor) is an active-site residue. Substrate is bound by residues 102–103 (LS) and Arg-112.

The protein belongs to the type-II 3-dehydroquinase family. As to quaternary structure, homododecamer.

It carries out the reaction 3-dehydroquinate = 3-dehydroshikimate + H2O. Its pathway is metabolic intermediate biosynthesis; chorismate biosynthesis; chorismate from D-erythrose 4-phosphate and phosphoenolpyruvate: step 3/7. In terms of biological role, catalyzes a trans-dehydration via an enolate intermediate. This is 3-dehydroquinate dehydratase from Xylella fastidiosa (strain 9a5c).